Consider the following 354-residue polypeptide: Glutamine synthetase (354 aa).

In terms of domain architecture, GS beta-grasp spans 22–101 (IQAEYVWVDG…VLAETYNSDG (80 aa)). Positions 108-354 (FRHHAAKVME…IIVETTLLNA (247 aa)) constitute a GS catalytic domain.

This sequence belongs to the glutamine synthetase family. Homooctamer.

The protein resides in the cytoplasm. It catalyses the reaction L-glutamate + NH4(+) + ATP = L-glutamine + ADP + phosphate + H(+). This Hebeloma cylindrosporum protein is Glutamine synthetase (GLN1).